A 305-amino-acid chain; its full sequence is Heme A synthase (305 aa).

Topologically, residues 1-6 (MKKFLK) are cytoplasmic. Residues 7-27 (VWSVLTIICMTVVVFGGALVT) form a helical membrane-spanning segment. The Extracellular segment spans residues 28–63 (KTGSADGCGNSWPLCNGQLVRLTDVTPEKLIEFMHR). A disulfide bridge links Cys35 with Cys42. Glu59 is an active-site residue. His62 is a binding site for heme o. Residues 64-84 (MTTGISSIFVIVLAICAWIYM) traverse the membrane as a helical segment. Over 85 to 92 (KNRRETKP) the chain is Cytoplasmic. Residues 93-113 (LAIIAVLFLIIQALMGMAAVV) form a helical membrane-spanning segment. The Extracellular portion of the chain corresponds to 114 to 122 (WGQNPYIMA). The chain crosses the membrane as a helical span at residues 123–143 (LHFGISIICYASIVLLALMIF). His124 provides a ligand contact to heme o. Residues 144-160 (EVDRKFDARNLVMGTKL) lie on the Cytoplasmic side of the membrane. Residues 161-181 (RINIYALTIYTYLAVYTGALV) form a helical membrane-spanning segment. Topologically, residues 182–212 (RHEKASMAVPVWPFENGKFIMPDSVQDYVQY) are extracellular. The helical transmembrane segment at 213 to 233 (FHRVAAFILIVWLLYVTWLVF) threads the bilayer. Residue His214 coordinates heme b. Residues 234-240 (RDYRRYR) are Cytoplasmic-facing. Residues 241-261 (VLTFSMVLSLLFIALQAVTGA) traverse the membrane as a helical segment. Topologically, residues 262–271 (LSVYTGVNLY) are extracellular. Residues 272–292 (IALAHSLIITMLFALLCYLCL) traverse the membrane as a helical segment. His276 contacts heme b. Topologically, residues 293–305 (LASRSKSNRLRIK) are cytoplasmic.

Belongs to the COX15/CtaA family. Type 1 subfamily. In terms of assembly, interacts with CtaB. Heme b serves as cofactor.

It is found in the cell membrane. The enzyme catalyses Fe(II)-heme o + 2 A + H2O = Fe(II)-heme a + 2 AH2. The protein operates within porphyrin-containing compound metabolism; heme A biosynthesis; heme A from heme O: step 1/1. Catalyzes the conversion of heme O to heme A by two successive hydroxylations of the methyl group at C8. The first hydroxylation forms heme I, the second hydroxylation results in an unstable dihydroxymethyl group, which spontaneously dehydrates, resulting in the formyl group of heme A. This is Heme A synthase from Listeria welshimeri serovar 6b (strain ATCC 35897 / DSM 20650 / CCUG 15529 / CIP 8149 / NCTC 11857 / SLCC 5334 / V8).